The following is a 102-amino-acid chain: Large ribosomal subunit protein uL24 (102 aa).

Positions 1 to 22 are disordered; the sequence is MHVKKGDTVQVMSGKDKGKQGV.

This sequence belongs to the universal ribosomal protein uL24 family. In terms of assembly, part of the 50S ribosomal subunit.

Its function is as follows. One of two assembly initiator proteins, it binds directly to the 5'-end of the 23S rRNA, where it nucleates assembly of the 50S subunit. Functionally, one of the proteins that surrounds the polypeptide exit tunnel on the outside of the subunit. The polypeptide is Large ribosomal subunit protein uL24 (Exiguobacterium sp. (strain ATCC BAA-1283 / AT1b)).